Reading from the N-terminus, the 220-residue chain is Cytidylate kinase (220 aa).

Residue 10–18 (GPAGAGKST) participates in ATP binding.

It belongs to the cytidylate kinase family. Type 1 subfamily.

Its subcellular location is the cytoplasm. It catalyses the reaction CMP + ATP = CDP + ADP. The catalysed reaction is dCMP + ATP = dCDP + ADP. This Alkaliphilus metalliredigens (strain QYMF) protein is Cytidylate kinase.